A 507-amino-acid chain; its full sequence is ATP synthase subunit alpha, chloroplastic (507 aa).

170-177 (GDRQTGKT) is a binding site for ATP.

Belongs to the ATPase alpha/beta chains family. As to quaternary structure, F-type ATPases have 2 components, CF(1) - the catalytic core - and CF(0) - the membrane proton channel. CF(1) has five subunits: alpha(3), beta(3), gamma(1), delta(1), epsilon(1). CF(0) has four main subunits: a, b, b' and c.

Its subcellular location is the plastid. It is found in the chloroplast thylakoid membrane. The enzyme catalyses ATP + H2O + 4 H(+)(in) = ADP + phosphate + 5 H(+)(out). Functionally, produces ATP from ADP in the presence of a proton gradient across the membrane. The alpha chain is a regulatory subunit. This chain is ATP synthase subunit alpha, chloroplastic, found in Panax ginseng (Korean ginseng).